The sequence spans 501 residues: Bifunctional purine biosynthesis protein PurH (501 aa).

Residues 1–144 (MKKRALISVF…KNFQDVVVIS (144 aa)) form the MGS-like domain.

The protein belongs to the PurH family.

The catalysed reaction is (6R)-10-formyltetrahydrofolate + 5-amino-1-(5-phospho-beta-D-ribosyl)imidazole-4-carboxamide = 5-formamido-1-(5-phospho-D-ribosyl)imidazole-4-carboxamide + (6S)-5,6,7,8-tetrahydrofolate. The enzyme catalyses IMP + H2O = 5-formamido-1-(5-phospho-D-ribosyl)imidazole-4-carboxamide. It functions in the pathway purine metabolism; IMP biosynthesis via de novo pathway; 5-formamido-1-(5-phospho-D-ribosyl)imidazole-4-carboxamide from 5-amino-1-(5-phospho-D-ribosyl)imidazole-4-carboxamide (10-formyl THF route): step 1/1. It participates in purine metabolism; IMP biosynthesis via de novo pathway; IMP from 5-formamido-1-(5-phospho-D-ribosyl)imidazole-4-carboxamide: step 1/1. This Clostridium botulinum (strain Eklund 17B / Type B) protein is Bifunctional purine biosynthesis protein PurH.